A 194-amino-acid polypeptide reads, in one-letter code: Large ribosomal subunit protein eL15 (194 aa).

A disordered region spans residues 165-194 (AGKKGRGLMNKGKGAEKVRPGIRANKKLGK).

The protein belongs to the eukaryotic ribosomal protein eL15 family.

This chain is Large ribosomal subunit protein eL15, found in Methanococcus aeolicus (strain ATCC BAA-1280 / DSM 17508 / OCM 812 / Nankai-3).